A 443-amino-acid chain; its full sequence is ATP-dependent protease ATPase subunit HslU (443 aa).

Residues isoleucine 20, 62–67, aspartate 255, glutamate 321, and arginine 393 each bind ATP; that span reads GVGKTE.

It belongs to the ClpX chaperone family. HslU subfamily. As to quaternary structure, a double ring-shaped homohexamer of HslV is capped on each side by a ring-shaped HslU homohexamer. The assembly of the HslU/HslV complex is dependent on binding of ATP.

Its subcellular location is the cytoplasm. ATPase subunit of a proteasome-like degradation complex; this subunit has chaperone activity. The binding of ATP and its subsequent hydrolysis by HslU are essential for unfolding of protein substrates subsequently hydrolyzed by HslV. HslU recognizes the N-terminal part of its protein substrates and unfolds these before they are guided to HslV for hydrolysis. The chain is ATP-dependent protease ATPase subunit HslU from Helicobacter pylori (strain G27).